Consider the following 673-residue polypeptide: MTDRFQLVSPYSPAGDQPAAIDKLVANFEAGLAKQTLLGVTGSGKTYTIANVVQQVQRPTLVMAPNKTLAAQLYGEFKSFFPHNAVEYFVSYYDYYQPEAYVPSSDTFIEKDSSINEHIEQMRLSATKTLLSRRDSLVVATVSAIYGLGAPEDYLSLRLILSVGEHIDQRQLIRHLTDLQYTRNEFELTRGAFRVRGEVLDVFPAESDTEALRIELFDGDIEQLTLFDPLTGETLRKLQRYTVYPKTHYATTRERTLSAVDTIKEELKERLEQLYSQNKLVEAQRLAQRTQFDLEMMAEVGFCNGIENYSRHLTGKAPGEPPPTLFDYLPPDALLVIDESHVTIPQIGAMYKGDRSRKETLVEFGFRLPSALDNRPLRFEEWEARSPRSIYVSATPGPYEVRESAGEVTELVVRPTGLIDPVVEIRPVGTQVDDLMSEVHERIKLGDRVLVTTLTKRMAENLTEYLGEHGIRVRYLHSDIDTVERVEIIRDLRLGKFDVLVGINLLREGLDMPEVSLVAILDADKEGFLRSTGSLIQTIGRAARNLRGKAILYADKMTRSMQAAIDETDRRREKQVEYNLEHGITPKSVERPIADIMEGARDDAAEKKSGKGRSKSRHVAEETPDYRAMKPAEIAGKLKSLEQKMYQHAKDLEFEAAAQIRDQIQKLKAASLG.

The region spanning 26–414 is the Helicase ATP-binding domain; it reads ANFEAGLAKQ…AGEVTELVVR (389 aa). 39–46 serves as a coordination point for ATP; sequence GVTGSGKT. Positions 92-115 match the Beta-hairpin motif; it reads YYDYYQPEAYVPSSDTFIEKDSSI. The region spanning 431-597 is the Helicase C-terminal domain; sequence QVDDLMSEVH…SVERPIADIM (167 aa). Basic and acidic residues-rich tracts occupy residues 600–609 and 618–628; these read ARDDAAEKKS and HVAEETPDYRA. The segment at 600-628 is disordered; the sequence is ARDDAAEKKSGKGRSKSRHVAEETPDYRA. The 36-residue stretch at 635–670 folds into the UVR domain; it reads AGKLKSLEQKMYQHAKDLEFEAAAQIRDQIQKLKAA.

The protein belongs to the UvrB family. As to quaternary structure, forms a heterotetramer with UvrA during the search for lesions. Interacts with UvrC in an incision complex.

It is found in the cytoplasm. Its function is as follows. The UvrABC repair system catalyzes the recognition and processing of DNA lesions. A damage recognition complex composed of 2 UvrA and 2 UvrB subunits scans DNA for abnormalities. Upon binding of the UvrA(2)B(2) complex to a putative damaged site, the DNA wraps around one UvrB monomer. DNA wrap is dependent on ATP binding by UvrB and probably causes local melting of the DNA helix, facilitating insertion of UvrB beta-hairpin between the DNA strands. Then UvrB probes one DNA strand for the presence of a lesion. If a lesion is found the UvrA subunits dissociate and the UvrB-DNA preincision complex is formed. This complex is subsequently bound by UvrC and the second UvrB is released. If no lesion is found, the DNA wraps around the other UvrB subunit that will check the other stand for damage. The polypeptide is UvrABC system protein B (Xanthomonas axonopodis pv. citri (strain 306)).